A 178-amino-acid chain; its full sequence is Large ribosomal subunit protein uL5 (178 aa).

Belongs to the universal ribosomal protein uL5 family. In terms of assembly, part of the 50S ribosomal subunit; part of the 5S rRNA/L5/L18/L25 subcomplex. Contacts the 5S rRNA and the P site tRNA. Forms a bridge to the 30S subunit in the 70S ribosome.

Its function is as follows. This is one of the proteins that bind and probably mediate the attachment of the 5S RNA into the large ribosomal subunit, where it forms part of the central protuberance. In the 70S ribosome it contacts protein S13 of the 30S subunit (bridge B1b), connecting the 2 subunits; this bridge is implicated in subunit movement. Contacts the P site tRNA; the 5S rRNA and some of its associated proteins might help stabilize positioning of ribosome-bound tRNAs. The sequence is that of Large ribosomal subunit protein uL5 from Psychrobacter sp. (strain PRwf-1).